The primary structure comprises 314 residues: Putative SET domain-containing protein L222 (314 aa).

Residues 23-172 enclose the SET domain; the sequence is EYIQVIYQNP…ANTEITISYG (150 aa).

This sequence belongs to the class V-like SAM-binding methyltransferase superfamily.

The sequence is that of Putative SET domain-containing protein L222 from Acanthamoeba polyphaga mimivirus (APMV).